Reading from the N-terminus, the 192-residue chain is Adenine phosphoribosyltransferase (192 aa).

Belongs to the purine/pyrimidine phosphoribosyltransferase family. In terms of assembly, homodimer.

The protein localises to the cytoplasm. The catalysed reaction is AMP + diphosphate = 5-phospho-alpha-D-ribose 1-diphosphate + adenine. Its pathway is purine metabolism; AMP biosynthesis via salvage pathway; AMP from adenine: step 1/1. In terms of biological role, catalyzes a salvage reaction resulting in the formation of AMP, that is energically less costly than de novo synthesis. This Corynebacterium efficiens (strain DSM 44549 / YS-314 / AJ 12310 / JCM 11189 / NBRC 100395) protein is Adenine phosphoribosyltransferase.